Consider the following 333-residue polypeptide: Uroporphyrinogen decarboxylase (333 aa).

Substrate contacts are provided by residues 21-25, Asp70, Tyr139, Ser194, and His309; that span reads RQVGR.

The protein belongs to the uroporphyrinogen decarboxylase family. As to quaternary structure, homodimer.

It localises to the cytoplasm. The enzyme catalyses uroporphyrinogen III + 4 H(+) = coproporphyrinogen III + 4 CO2. Its pathway is porphyrin-containing compound metabolism; protoporphyrin-IX biosynthesis; coproporphyrinogen-III from 5-aminolevulinate: step 4/4. In terms of biological role, catalyzes the decarboxylation of four acetate groups of uroporphyrinogen-III to yield coproporphyrinogen-III. In Chlamydia abortus (strain DSM 27085 / S26/3) (Chlamydophila abortus), this protein is Uroporphyrinogen decarboxylase.